A 436-amino-acid polypeptide reads, in one-letter code: Enolase (436 aa).

H159 and E168 together coordinate substrate. The active-site Proton donor is E211. D246, E295, and D322 together coordinate Mg(2+). Residues E295 and D322 each contribute to the substrate site. The active-site Proton acceptor is K347. Substrate-binding positions include 374–377 (SHRS) and K398.

This sequence belongs to the enolase family. As to quaternary structure, homodimer. Mg(2+) serves as cofactor.

It localises to the cytoplasm. The catalysed reaction is (2R)-2-phosphoglycerate = phosphoenolpyruvate + H2O. The protein operates within carbohydrate degradation; glycolysis; pyruvate from D-glyceraldehyde 3-phosphate: step 4/5. The chain is Enolase from Neocallimastix frontalis (Rumen fungus).